The sequence spans 359 residues: Hyaluronan and proteoglycan link protein 3 (359 aa).

The signal sequence occupies residues 1–17; it reads MSLLFLVLLSPFPCVLG. Positions 48–164 constitute an Ig-like V-type domain; that stretch reads KLVVETTEES…ESGLVELELR (117 aa). Intrachain disulfides connect Cys70–Cys146, Cys188–Cys259, Cys212–Cys233, Cys286–Cys355, and Cys311–Cys332. 2 consecutive Link domains span residues 166–261 and 266–357; these read VVFP…FCFA and GRVY…YCYV.

The protein belongs to the HAPLN family.

The protein localises to the secreted. Its subcellular location is the extracellular space. It is found in the extracellular matrix. Its function is as follows. May function in hyaluronic acid binding. This is Hyaluronan and proteoglycan link protein 3 (Hapln3) from Mus musculus (Mouse).